A 420-amino-acid chain; its full sequence is Transcription factor dbaG (420 aa).

The protein localises to the nucleus. Its function is as follows. Transcription factor that coregulates the expression of the gene cluster that mediates the biosynthesis of the antibiotic 2,4- dihydroxy-3-methyl-6-(2-oxopropyl)benzaldehyde (DHMBA) and its derivatives. Specifically positively regulates the expression of the FAD-dependent oxidoreductase dbaF. The polypeptide is Transcription factor dbaG (Emericella nidulans (strain FGSC A4 / ATCC 38163 / CBS 112.46 / NRRL 194 / M139) (Aspergillus nidulans)).